A 424-amino-acid polypeptide reads, in one-letter code: Enolase (424 aa).

Glutamine 165 lines the (2R)-2-phosphoglycerate pocket. Residue glutamate 207 is the Proton donor of the active site. Mg(2+) is bound by residues aspartate 244, glutamate 283, and aspartate 310. The (2R)-2-phosphoglycerate site is built by lysine 335, arginine 364, serine 365, and lysine 386. Lysine 335 serves as the catalytic Proton acceptor.

The protein belongs to the enolase family. It depends on Mg(2+) as a cofactor.

The protein resides in the cytoplasm. It is found in the secreted. Its subcellular location is the cell surface. It carries out the reaction (2R)-2-phosphoglycerate = phosphoenolpyruvate + H2O. The protein operates within carbohydrate degradation; glycolysis; pyruvate from D-glyceraldehyde 3-phosphate: step 4/5. Catalyzes the reversible conversion of 2-phosphoglycerate (2-PG) into phosphoenolpyruvate (PEP). It is essential for the degradation of carbohydrates via glycolysis. This Chlamydia abortus (strain DSM 27085 / S26/3) (Chlamydophila abortus) protein is Enolase.